The primary structure comprises 410 residues: Peptidase T (410 aa).

Zn(2+) is bound at residue histidine 79. Residue aspartate 81 is part of the active site. Residue aspartate 142 participates in Zn(2+) binding. Glutamate 176 serves as the catalytic Proton acceptor. Zn(2+) contacts are provided by glutamate 177, aspartate 199, and histidine 381.

This sequence belongs to the peptidase M20B family. The cofactor is Zn(2+).

The protein resides in the cytoplasm. It catalyses the reaction Release of the N-terminal residue from a tripeptide.. Cleaves the N-terminal amino acid of tripeptides. The sequence is that of Peptidase T from Bacillus cereus (strain ATCC 10987 / NRS 248).